A 430-amino-acid chain; its full sequence is Sorting nexin-4 (430 aa).

Residues 1–18 (MDSASADASVTGSGNAKG) show a composition bias toward polar residues. The segment at 1–22 (MDSASADASVTGSGNAKGSSAE) is disordered. Residues 33–162 (LEILVSDPQK…IFLVGNEWDT (130 aa)) form the PX domain. 3 residues coordinate a 1,2-diacyl-sn-glycero-3-phospho-(1D-myo-inositol-3-phosphate): R83, K109, and R128. Positions 351–414 (ASRRDKINKL…NNLADENIKF (64 aa)) form a coiled coil.

It belongs to the sorting nexin family.

The protein localises to the cytoplasm. It localises to the cytosol. It is found in the preautophagosomal structure membrane. Its subcellular location is the endosome membrane. In terms of biological role, sorting nexin, involved in the separation or division of vacuoles throughout the entire life cycle of the cells. Involved in retrieval of late-Golgi SNAREs from post-Golgi endosomes to the trans-Golgi network, for cytoplasm to vacuole transport (Cvt), and autophagy of large cargos including mitophagy, pexophagy and glycophagy. This Candida glabrata (strain ATCC 2001 / BCRC 20586 / JCM 3761 / NBRC 0622 / NRRL Y-65 / CBS 138) (Yeast) protein is Sorting nexin-4 (SNX4).